The chain runs to 530 residues: Carbohydrate sulfotransferase 2 (530 aa).

Residues 1 to 54 are Cytoplasmic-facing; the sequence is MSRSPQRALPPGALPRLLQAAPAAAPRALLPQWPRRPGRRWPASPLGMKVFRRK. The chain crosses the membrane as a helical; Signal-anchor for type II membrane protein span at residues 55–75; that stretch reads ALVLCAGYALLLVLTMLNLLD. The Lumenal segment spans residues 76-530; it reads YKWHKEPLQQ…SKTLLRKPRL (455 aa). The interval 89–119 is disordered; it reads DGPLGAAAGAAGGSWGRPGPPPAGPPRAHAR. Residue 173–179 participates in 3'-phosphoadenylyl sulfate binding; sequence WRSGSSF. N243 carries an N-linked (GlcNAc...) asparagine glycan. 3'-phosphoadenylyl sulfate is bound at residue 332–340; it reads RDPRAVASS. N-linked (GlcNAc...) asparagine glycosylation is found at N457 and N475.

Belongs to the sulfotransferase 1 family. Gal/GlcNAc/GalNAc subfamily. In terms of assembly, homodimer; disulfide-linked. Homodimerization is not essential for enzyme activity. Post-translationally, glycosylation at Asn-475 is required for catalytic activity. Widely expressed. Highly expressed in bone marrow, peripheral blood leukocytes, spleen, brain, spinal cord, ovary and placenta. Expressed by high endothelial cells (HEVs) and leukocytes.

It localises to the golgi apparatus. The protein resides in the trans-Golgi network membrane. It catalyses the reaction 3-O-{N-acetyl-beta-D-glucosaminyl-(1-&gt;3)-beta-D-galactosyl-(1-&gt;3)-N-acetyl-alpha-D-galactosaminyl}-L-threonyl-[protein] + 3'-phosphoadenylyl sulfate = 3-O-{6-O-sulfo-N-acetyl-beta-D-glucosaminyl-(1-&gt;3)-beta-D-galactosyl-(1-&gt;3)-N-acetyl-alpha-D-galactosaminyl}-L-threonyl-[protein] + adenosine 3',5'-bisphosphate + H(+). It carries out the reaction 3-O-{N-acetyl-beta-D-glucosaminyl-(1-&gt;3)-beta-D-galactosyl-(1-&gt;3)-N-acetyl-alpha-D-galactosaminyl}-L-seryl-[protein] + 3'-phosphoadenylyl sulfate = 3-O-{6-O-sulfo-N-acetyl-beta-D-glucosaminyl-(1-&gt;3)-beta-D-galactosyl-(1-&gt;3)-N-acetyl-alpha-D-galactosaminyl}-L-seryl-[protein] + adenosine 3',5'-bisphosphate + H(+). The catalysed reaction is a 3-O-{beta-D-galactosyl-(1-&gt;3)-[N-acetyl-beta-D-glucosaminyl-(1-&gt;6)]-N-acetyl-alpha-D-galactosaminyl}-L-threonyl-[protein] + 3'-phosphoadenylyl sulfate = 3-O-{beta-D-galactosyl-(1-&gt;3)-[6-O-sulfo-N-acetyl-beta-D-glucosaminyl-(1-&gt;6)]-N-acetyl-alpha-D-galactosaminyl}-L-threonyl-[protein] + adenosine 3',5'-bisphosphate + H(+). The enzyme catalyses 3-O-{beta-D-galactosyl-(1-&gt;3)-[N-acetyl-beta-D-glucosaminyl-(1-&gt;6)]-N-acetyl-alpha-D-galactosaminyl}-L-seryl-[protein] + 3'-phosphoadenylyl sulfate = 3-O-{beta-D-galactosyl-(1-&gt;3)-[6-O-sulfo-N-acetyl-beta-D-glucosaminyl-(1-&gt;6)]-N-acetyl-alpha-D-galactosaminyl}-L-seryl-[protein] + adenosine 3',5'-bisphosphate + H(+). Its pathway is protein modification; carbohydrate sulfation. In terms of biological role, sulfotransferase that utilizes 3'-phospho-5'-adenylyl sulfate (PAPS) as sulfonate donor to catalyze the transfer of sulfate to position 6 of non-reducing N-acetylglucosamine (GlcNAc) residues within keratan-like structures on N-linked glycans and within mucin-associated glycans that can ultimately serve as SELL ligands. SELL ligands are present in high endothelial cells (HEVs) and play a central role in lymphocyte homing at sites of inflammation. Participates in biosynthesis of the SELL ligand sialyl 6-sulfo Lewis X and in lymphocyte homing to Peyer patches. Has no activity toward O-linked sugars. Its substrate specificity may be influenced by its subcellular location. Sulfates GlcNAc residues at terminal, non-reducing ends of oligosaccharide chains. The polypeptide is Carbohydrate sulfotransferase 2 (CHST2) (Homo sapiens (Human)).